Reading from the N-terminus, the 203-residue chain is Glycerol-3-phosphate acyltransferase (203 aa).

4 helical membrane-spanning segments follow: residues 6 to 26, 82 to 102, 118 to 138, and 141 to 161; these read LTLLMIVAAYLAGSVSSAVLV, AISLGLIAIAACLGHIYPVFF, APIGDDLAICLMASWVVLVLI, and YSSLAAIITALLAPLYTWWLD.

It belongs to the PlsY family. In terms of assembly, probably interacts with PlsX.

The protein localises to the cell inner membrane. It catalyses the reaction an acyl phosphate + sn-glycerol 3-phosphate = a 1-acyl-sn-glycero-3-phosphate + phosphate. It functions in the pathway lipid metabolism; phospholipid metabolism. Functionally, catalyzes the transfer of an acyl group from acyl-phosphate (acyl-PO(4)) to glycerol-3-phosphate (G3P) to form lysophosphatidic acid (LPA). This enzyme utilizes acyl-phosphate as fatty acyl donor, but not acyl-CoA or acyl-ACP. The protein is Glycerol-3-phosphate acyltransferase of Shewanella oneidensis (strain ATCC 700550 / JCM 31522 / CIP 106686 / LMG 19005 / NCIMB 14063 / MR-1).